A 765-amino-acid chain; its full sequence is Zinc transporter ZIP6 (765 aa).

The first 20 residues, 1–20, serve as a signal peptide directing secretion; the sequence is MATDLSVIMILTFALWVTSP. The Extracellular segment spans residues 21–335; sequence LHELQSTAAF…PKTYSLQIAW (315 aa). A glycan (N-linked (GlcNAc...) asparagine) is linked at N68. Basic and acidic residues-rich tracts occupy residues 96-135 and 174-186; these read DHEHHADHEHHSDHEHHSDHEHHSDHEHHSDHEHHSDHEH and RPAEHMNGRRNIK. 2 disordered regions span residues 96-196 and 209-257; these read DHEH…EVTS and VETI…SEPR. The span at 187-196 shows a compositional bias: low complexity; it reads ESASSSEVTS. The span at 224–233 shows a compositional bias: polar residues; the sequence is VNPSTPPSIT. The span at 238 to 247 shows a compositional bias: basic residues; that stretch reads VGRLSRLARK. The span at 248-257 shows a compositional bias: basic and acidic residues; sequence KSNESVSEPR. N-linked (GlcNAc...) asparagine glycans are attached at residues N250, N275, and N292. A helical transmembrane segment spans residues 336–356; sequence LGGFIAISIISFLSLLGVILV. Over 357-365 the chain is Cytoplasmic; the sequence is PLMNRVFFK. Residues 366–386 form a helical membrane-spanning segment; it reads FLLSFLVALAVGTLSGDALLH. Topologically, residues 387 to 433 are extracellular; it reads LLPHSHASHQHSHSHEEPAMEMKRGPLFSHLSAQNIEESSYFDSTWK. Residues 434–454 form a helical membrane-spanning segment; that stretch reads GLTALGGLYFMFLVEHVLTLI. Topologically, residues 455–667 are cytoplasmic; the sequence is KQFKDKKKKN…LKAGMTVKQA (213 aa). The interval 458–519 is disordered; that stretch reads KDKKKKNQKK…EPSPFDSQQP (62 aa). The stretch at 475–495 forms a coiled coil; sequence ESKKQLSKYDSQLSSNEEKVD. Phosphoserine is present on residues S481 and S488. The segment covering 490 to 508 has biased composition (basic and acidic residues); it reads NEEKVDPGERPESYLRADS. Residues 509–519 are compositionally biased toward polar residues; it reads QEPSPFDSQQP. A helical membrane pass occupies residues 668-688; the sequence is VLYNALSAMLAYLGMATGIFI. Topologically, residues 689 to 696 are extracellular; it reads GHYAENVS. N-linked (GlcNAc...) asparagine glycosylation occurs at N694. The helical transmembrane segment at 697-717 threads the bilayer; the sequence is MWIFALTAGLFMYVALVDMVP. Residues 718-734 lie on the Cytoplasmic side of the membrane; sequence EMLHNDASDHGCSRWGY. A helical membrane pass occupies residues 735-755; it reads FFLQNAGILLGFGIMLLISIF. Residues 756–765 lie on the Extracellular side of the membrane; the sequence is EHKIVFRINF.

The protein belongs to the ZIP transporter (TC 2.A.5) family. In terms of assembly, interacts with SLC39A10; which triggers cells to undergo EMT and mitosis. Found in a complex with SLC39A6, SLC39A10 and with the 'Ser-727' phosphorylated form of STAT3 throughout mitosis. Found in a complex with SLC39A6, SLC39A10 and with NCAM1; this complex controls NCAM1 phosphorylation and integration into focal adhesion complexes during epithelial-to-mesenchymal transition (EMT). Found in a complex with SLC39A6, SLC39A10 and with GSK3B that controls NCAM1 phosphorylation. Cleaved on the N-terminus before locating to the plasma membrane. In terms of processing, N-glycosylated. Post-translationally, phosphorylated by ZAP70 in response to TCR stimulation leading to its activation. As to expression, highly expressed in the brain and testis. In the brain strongly expressed in the CA1 and CA3 regions, Purkinje cells in cerebellum and dentate gyrus in hippocampus. In testis found in spermatids or mature sperms in the central areas of seminiferous tubules.

Its subcellular location is the cell membrane. The protein resides in the cell projection. It is found in the lamellipodium membrane. The protein localises to the membrane raft. It localises to the apical cell membrane. It carries out the reaction Zn(2+)(in) = Zn(2+)(out). Its function is as follows. Zinc-influx transporter which plays a role in zinc homeostasis and in the induction of epithelial-to-mesenchymal transition (EMT). When associated with SLC39A10, the heterodimer formed by SLC39A10 and SLC39A6 mediates cellular zinc uptake to trigger cells to undergo epithelial- to-mesenchymal transition (EMT). The SLC39A10-SLC39A6 heterodimer also controls NCAM1 phosphorylation and its integration into focal adhesion complexes during EMT. Zinc influx inactivates GSK3B, enabling unphosphorylated SNAI1 in the nucleus to down-regulate adherence genes such as E-cadherin, causing loss of cell adherence. In addition, the SLC39A10-SLC39A6 heterodimer plays an essentiel role in initiating mitosis by importing zinc into cells to initiate a pathway resulting in the onset of mitosis. Participates in the T-cell receptor signaling regulation by mediating cellular zinc uptake into activated lymphocytes. Regulates the zinc influx necessary for proper meiotic progression to metaphase II (MII) that allows the oocyte-to-egg transition. The polypeptide is Zinc transporter ZIP6 (Mus musculus (Mouse)).